A 593-amino-acid chain; its full sequence is Efflux pump FUBT (593 aa).

Residues 1–44 are disordered; it reads MAIDPQPSSPSLSSETIANDTIGNDNNVNEPSVEPKTQENQHTV. Residues 9-30 show a composition bias toward polar residues; that stretch reads SPSLSSETIANDTIGNDNNVNE. Asparagine 19 carries N-linked (GlcNAc...) asparagine glycosylation. The next 12 helical transmembrane spans lie at 98–118, 135–155, 167–187, 195–215, 227–247, 254–274, 337–357, 367–387, 410–430, 438–458, 468–488, and 503–523; these read WAFVLLQSLACLATTFASSAY, VATLGISLYVLGFTFGPLIWA, FFFTFMVATAFSAGAAGAGSI, FLTGSIGSAPLSNAPALIADM, MFSGAPFLGPAIGPIAGGFLG, WLHGLMAAFTGVTWIACTVFI, IYISIIYGTMYMCFAAFPIVF, IGGLAFTGIVIGVVLSIISFA, LPPAIMGSLLIPIGLFWFAWT, IVPIIGTVFFAWGLVLVFMAL, IFAASIMAANSALRSLFGAAF, and WASSIPAFLALACVPFPFLFY. The interval 570–593 is disordered; that stretch reads THNSHASAAHSHGHRRSLSYTRSV.

The protein belongs to the major facilitator superfamily. DHA1 family. Polyamines/proton antiporter (TC 2.A.1.2.16) subfamily.

It localises to the cell membrane. Efflux pump involved in export of fusaric acid, a mycotoxin with low to moderate toxicity to animals and humans, but with high phytotoxic properties. Constitutes a self-protecting mechanism of the fungus against critical levels of FSA within the cell. This is Efflux pump FUBT from Fusarium oxysporum (Fusarium vascular wilt).